A 167-amino-acid chain; its full sequence is Thiol peroxidase (167 aa).

Positions 18 to 167 constitute a Thioredoxin domain; sequence VKVGDQAPDF…PIEAAKALVK (150 aa). The active-site Cysteine sulfenic acid (-SOH) intermediate is the C60. Cysteines 60 and 94 form a disulfide.

This sequence belongs to the peroxiredoxin family. Tpx subfamily. As to quaternary structure, homodimer.

It carries out the reaction a hydroperoxide + [thioredoxin]-dithiol = an alcohol + [thioredoxin]-disulfide + H2O. Its function is as follows. Thiol-specific peroxidase that catalyzes the reduction of hydrogen peroxide and organic hydroperoxides to water and alcohols, respectively. Plays a role in cell protection against oxidative stress by detoxifying peroxides. The protein is Thiol peroxidase of Bacillus subtilis (strain 168).